The chain runs to 458 residues: tRNA modification GTPase MnmE (458 aa).

(6S)-5-formyl-5,6,7,8-tetrahydrofolate is bound by residues R23, E80, and K122. The region spanning G218–G380 is the TrmE-type G domain. A K(+)-binding site is contributed by N228. Residues N228 to S233, T247 to T253, D272 to G275, and S361 to R363 each bind GTP. Residue S232 participates in Mg(2+) binding. K(+) contacts are provided by T247, I249, and T252. T253 is a Mg(2+) binding site. K458 is a (6S)-5-formyl-5,6,7,8-tetrahydrofolate binding site.

This sequence belongs to the TRAFAC class TrmE-Era-EngA-EngB-Septin-like GTPase superfamily. TrmE GTPase family. Homodimer. Heterotetramer of two MnmE and two MnmG subunits. Requires K(+) as cofactor.

It is found in the cytoplasm. Its function is as follows. Exhibits a very high intrinsic GTPase hydrolysis rate. Involved in the addition of a carboxymethylaminomethyl (cmnm) group at the wobble position (U34) of certain tRNAs, forming tRNA-cmnm(5)s(2)U34. The protein is tRNA modification GTPase MnmE of Hamiltonella defensa subsp. Acyrthosiphon pisum (strain 5AT).